We begin with the raw amino-acid sequence, 305 residues long: MYNGILPVYKERGLTSHDVVFKLRKILKTKKIGHTGTLDPEVAGVLPVCIGNATRVSDYVMDMGKAYEATVSIGRSTTTEDQTGDTLETKGVHSADFNKDDIDRLLESFKGIIEQIPPMYSSVKVNGKKLYEYARNNETVERPKRKVNIKDIGRISELDFKENECHFKIRVICGKGTYIRTLATDIGVKLGFPAHMSKLTRIESGGFVLKDSLTLEQIKELHEQDSLQNKLFPLEYGLKGLPSIKIKDSHIKKRILNGQKFNKNEFDNKIKDQIVFIDGDSEKVLAIYMVHPTKESEIKPKKVFN.

The active-site Nucleophile is the Asp-39.

It belongs to the pseudouridine synthase TruB family. Type 1 subfamily.

The enzyme catalyses uridine(55) in tRNA = pseudouridine(55) in tRNA. Responsible for synthesis of pseudouridine from uracil-55 in the psi GC loop of transfer RNAs. The chain is tRNA pseudouridine synthase B from Staphylococcus aureus (strain MW2).